Consider the following 210-residue polypeptide: Probable septum site-determining protein MinC (210 aa).

The protein belongs to the MinC family. As to quaternary structure, interacts with MinD and FtsZ.

Cell division inhibitor that blocks the formation of polar Z ring septums. Rapidly oscillates between the poles of the cell to destabilize FtsZ filaments that have formed before they mature into polar Z rings. Prevents FtsZ polymerization. This is Probable septum site-determining protein MinC from Thermotoga sp. (strain RQ2).